We begin with the raw amino-acid sequence, 330 residues long: Agamous-like MADS-box protein AGL75 (330 aa).

An MADS-box domain is found at 19–61 (TSLSNRLETIFKKASELCTLCDIEACVIYYGPDGELKTWPKEK).

In terms of assembly, interacts with MEE14/CBP1.

The protein localises to the nucleus. Probable transcription factor that may function in the maintenance of the proper function of the central cell in pollen tube attraction. This is Agamous-like MADS-box protein AGL75 from Arabidopsis thaliana (Mouse-ear cress).